Here is a 449-residue protein sequence, read N- to C-terminus: XK-related protein 2 (449 aa).

A run of 10 helical transmembrane segments spans residues 35–55, 68–88, 98–118, 174–194, 204–224, 241–261, 269–289, 306–326, 357–377, and 382–402; these read FSILFSTFLYCGEAASALYMV, TYTFSFFMFSSIMVQLTLIFV, LSLFMHLILLGPVIRCLEAMI, IQAFLGSVPQLTYQLYVSLIS, LMAFSLISVTYGATLCNMLAI, LCITVWRTLEITSRLVILVLF, AVPFLVLNFLIILFEPWVKFW, VGTLVVLISVTILYAGINFSC, LVENVIMVLVFKYFGVKVLLN, and LIAVQLIIAYLISIGVMLLFF.

Belongs to the XK family.

Its subcellular location is the membrane. This chain is XK-related protein 2 (Xkrx), found in Mus musculus (Mouse).